The following is a 152-amino-acid chain: Snaclec 5 (152 aa).

A signal peptide spans 1-23 (MGRFIFLSSGLLVVFLSLSGTGA). 3 disulfides stabilise this stretch: Cys-27–Cys-38, Cys-55–Cys-148, and Cys-123–Cys-140. The region spanning 34–149 (YGQHCYRAFK…CASHNPFVCK (116 aa)) is the C-type lectin domain.

Belongs to the snaclec family. As to quaternary structure, heterodimer; disulfide-linked. Expressed by the venom gland.

It localises to the secreted. Functionally, interferes with one step of hemostasis (modulation of platelet aggregation, or coagulation cascade, for example). In Bitis arietans (African puff adder), this protein is Snaclec 5.